The chain runs to 103 residues: MVVKKSKPKNQIRVEDLDLPKLNTSKNPQTKIQKKGKKKGKIFAETKDDLQNILNQVTYELDDKIKSKLQVAHEREAVFSKQSDRKISNNKADKKTGRKNEKK.

The segment covering 1 to 10 has biased composition (basic residues); that stretch reads MVVKKSKPKN. 2 disordered regions span residues 1-38 and 77-103; these read MVVK…KGKK and AVFS…NEKK.

This is an uncharacterized protein from Schizosaccharomyces pombe (strain 972 / ATCC 24843) (Fission yeast).